A 360-amino-acid chain; its full sequence is Peptide chain release factor 1 (360 aa).

Gln-234 carries the post-translational modification N5-methylglutamine. The interval 285 to 305 (RAQGIAEDRKSQVGTGDRSER) is disordered.

Belongs to the prokaryotic/mitochondrial release factor family. In terms of processing, methylated by PrmC. Methylation increases the termination efficiency of RF1.

The protein localises to the cytoplasm. In terms of biological role, peptide chain release factor 1 directs the termination of translation in response to the peptide chain termination codons UAG and UAA. This Clostridium beijerinckii (strain ATCC 51743 / NCIMB 8052) (Clostridium acetobutylicum) protein is Peptide chain release factor 1.